Here is a 286-residue protein sequence, read N- to C-terminus: UPF0761 membrane protein KPK_5501 (286 aa).

The next 7 helical transmembrane spans lie at 44–64, 74–94, 104–124, 140–160, 183–203, 210–230, and 244–264; these read LLSLVPLIAVVFALFAAFPMF, FIFANFIPATGDVIQGYIEQF, VGAFGLIVTSLLLMYSIDSAL, FAVYWMILTLGPLLAGASLAI, LFPLILSWAAFWLLYSIVPTT, AVIGALVAALLFEAGKKAFAL, and VISVVPILFVWVYWTWCIVLL.

Belongs to the UPF0761 family.

It is found in the cell inner membrane. The polypeptide is UPF0761 membrane protein KPK_5501 (Klebsiella pneumoniae (strain 342)).